The sequence spans 322 residues: Ferredoxin--NADP reductase (322 aa).

FAD-binding residues include Asp34, Gln42, Tyr47, Val87, Phe120, Asp279, and Thr320.

Belongs to the ferredoxin--NADP reductase type 2 family. As to quaternary structure, homodimer. FAD is required as a cofactor.

The catalysed reaction is 2 reduced [2Fe-2S]-[ferredoxin] + NADP(+) + H(+) = 2 oxidized [2Fe-2S]-[ferredoxin] + NADPH. The sequence is that of Ferredoxin--NADP reductase from Streptococcus gordonii (strain Challis / ATCC 35105 / BCRC 15272 / CH1 / DL1 / V288).